Reading from the N-terminus, the 101-residue chain is Small ribosomal subunit protein bS6 (101 aa).

The protein belongs to the bacterial ribosomal protein bS6 family.

Binds together with bS18 to 16S ribosomal RNA. The chain is Small ribosomal subunit protein bS6 from Paenarthrobacter aurescens (strain TC1).